The following is a 401-amino-acid chain: E3 ubiquitin-protein ligase NHLRC1 (401 aa).

The RING-type zinc-finger motif lies at 28 to 74; sequence CKVCFERFGHWQQRRPRNLPCGHVVCLACVAALAHPRTLGLECPFCR. NHL repeat units follow at residues 115-159, 163-206, 207-247, 250-303, 304-352, and 353-396; these read TLTC…FDSG, AHQF…FDFF, GQIK…LEAD, EGVL…FNST, MQLI…LGKP, and EEFP…FKVM.

As to quaternary structure, interacts with AGL. Interacts (via the NHL repeats) with EPM2A/laforin. Forms a complex with EPM2A/laforin and HSP70. Interacts with PRDM8.

It is found in the endoplasmic reticulum. It localises to the nucleus. The catalysed reaction is S-ubiquitinyl-[E2 ubiquitin-conjugating enzyme]-L-cysteine + [acceptor protein]-L-lysine = [E2 ubiquitin-conjugating enzyme]-L-cysteine + N(6)-ubiquitinyl-[acceptor protein]-L-lysine.. The protein operates within protein modification; protein ubiquitination. E3 ubiquitin-protein ligase. Together with the phosphatase EPM2A/laforin, appears to be involved in the clearance of toxic polyglucosan and protein aggregates via multiple pathways. In complex with EPM2A/laforin and HSP70, suppresses the cellular toxicity of misfolded proteins by promoting their degradation through the ubiquitin-proteasome system (UPS). Ubiquitinates the glycogen-targeting protein phosphatase subunits PPP1R3C/PTG and PPP1R3D in a laforin-dependent manner and targets them for proteasome-dependent degradation, thus decreasing glycogen accumulation. Polyubiquitinates EPM2A/laforin and ubiquitinates AGL and targets them for proteasome-dependent degradation. Also promotes proteasome-independent protein degradation through the macroautophagy pathway. This is E3 ubiquitin-protein ligase NHLRC1 (Nhlrc1) from Mus musculus (Mouse).